The following is a 67-amino-acid chain: Prokaryotic ubiquitin-like protein Pup (67 aa).

The tract at residues 1–26 (MATKETGGQKHATRRNQEVEEIEVTT) is disordered. The segment at 23 to 61 (EVTTETSVRNEKLAEDVDDILDEIDEVLESNAEDFVRQF) is ARC ATPase binding. Residues 27–55 (ETSVRNEKLAEDVDDILDEIDEVLESNAE) adopt a coiled-coil conformation. An Isoglutamyl lysine isopeptide (Glu-Lys) (interchain with K-? in acceptor proteins) cross-link involves residue Glu-67.

It belongs to the prokaryotic ubiquitin-like protein family. As to quaternary structure, strongly interacts with the proteasome-associated ATPase ARC through a hydrophobic interface; the interacting region of Pup lies in its C-terminal half. There is one Pup binding site per ARC hexamer ring.

It participates in protein degradation; proteasomal Pup-dependent pathway. In terms of biological role, protein modifier that is covalently attached to lysine residues of substrate proteins, thereby targeting them for proteasomal degradation. The tagging system is termed pupylation. The polypeptide is Prokaryotic ubiquitin-like protein Pup (Thermobifida fusca (strain YX)).